The chain runs to 675 residues: Methionine--tRNA ligase (675 aa).

Residues 15–25 (PYANGSIHLGH) carry the 'HIGH' region motif. C146, C149, C159, and C162 together coordinate Zn(2+). Residues 332-336 (KMSKS) carry the 'KMSKS' region motif. Residue K335 participates in ATP binding. The tRNA-binding domain maps to 573–675 (DFAKIDMRIA…SGAKPGHQVK (103 aa)).

Belongs to the class-I aminoacyl-tRNA synthetase family. MetG type 1 subfamily. As to quaternary structure, homodimer. The cofactor is Zn(2+).

It is found in the cytoplasm. It catalyses the reaction tRNA(Met) + L-methionine + ATP = L-methionyl-tRNA(Met) + AMP + diphosphate. In terms of biological role, is required not only for elongation of protein synthesis but also for the initiation of all mRNA translation through initiator tRNA(fMet) aminoacylation. This chain is Methionine--tRNA ligase, found in Proteus mirabilis (strain HI4320).